A 417-amino-acid polypeptide reads, in one-letter code: Sulfate adenylyltransferase (417 aa).

Over residues 1-10 (MTSITANQKP) the composition is skewed to polar residues. A disordered region spans residues 1 to 20 (MTSITANQKPSKLVPPHGSP).

This sequence belongs to the sulfate adenylyltransferase family.

It carries out the reaction sulfate + ATP + H(+) = adenosine 5'-phosphosulfate + diphosphate. It functions in the pathway sulfur metabolism; hydrogen sulfide biosynthesis; sulfite from sulfate: step 1/3. This Psychrobacter arcticus (strain DSM 17307 / VKM B-2377 / 273-4) protein is Sulfate adenylyltransferase.